Consider the following 390-residue polypeptide: Multidrug resistance protein MdtL (390 aa).

Transmembrane regions (helical) follow at residues 4–24, 42–62, 69–89, 93–113, 131–151, 158–178, 199–221, 245–265, 269–289, 293–313, 316–336, and 353–375; these read FLIC…MYLV, IAFS…GKVA, PVAI…SRAT, LFLT…VVAF, LLNG…HLIM, SLFY…VFIL, LLNR…ILTF, ALTA…LSVF, TLML…SLSS, VTLF…GVAM, ALGP…IAQV, and ALNM…LMTI.

This sequence belongs to the major facilitator superfamily. DHA1 family. MdtL (TC 2.A.1.2.22) subfamily.

The protein localises to the cell inner membrane. This chain is Multidrug resistance protein MdtL, found in Citrobacter koseri (strain ATCC BAA-895 / CDC 4225-83 / SGSC4696).